The following is a 363-amino-acid chain: UDP-N-acetylenolpyruvoylglucosamine reductase (363 aa).

Residues L27–S197 form the FAD-binding PCMH-type domain. R175 is an active-site residue. The active-site Proton donor is the S252. E355 is an active-site residue.

It belongs to the MurB family. FAD serves as cofactor.

Its subcellular location is the cytoplasm. It catalyses the reaction UDP-N-acetyl-alpha-D-muramate + NADP(+) = UDP-N-acetyl-3-O-(1-carboxyvinyl)-alpha-D-glucosamine + NADPH + H(+). It participates in cell wall biogenesis; peptidoglycan biosynthesis. In terms of biological role, cell wall formation. The chain is UDP-N-acetylenolpyruvoylglucosamine reductase from Salinispora arenicola (strain CNS-205).